The chain runs to 1503 residues: Dynein axonemal assembly factor 1 homolog (1503 aa).

6 LRR repeats span residues 34–56, 57–78, 79–100, 101–122, 125–146, and 150–171; these read RLND…EEYT, ELKC…EKLG, KLKC…DPCR, ELDT…GTNI, VLNT…SDLI, and TLSV…KIFE. Residues 185–223 enclose the LRRCT domain; that stretch reads PVVSRLPQYRKTLILACKELTYLDSRPVFPRDRACAEAW. Disordered regions lie at residues 249–280, 305–328, 956–1033, and 1295–1315; these read SINC…DDTC, EQPI…TSSQ, DSGD…DHDE, and STNN…STSE. Residues 973–985 are compositionally biased toward acidic residues; sequence TESEDYDTAEDEY. Residues 1014–1031 are compositionally biased toward basic and acidic residues; it reads QKQDKPDTVEEVGKKNDH. The segment covering 1303–1314 has biased composition (low complexity); sequence TKKTLPTKTSTS.

Belongs to the DNAAF1 family.

The protein resides in the cell projection. It is found in the cilium. In terms of biological role, cilium-specific protein required for cilia structures. This chain is Dynein axonemal assembly factor 1 homolog (dtr), found in Drosophila erecta (Fruit fly).